Reading from the N-terminus, the 800-residue chain is U4/U6.U5 tri-snRNP-associated protein 1 (800 aa).

A disordered region spans residues 1–120 (MGSSKKHRGE…SSGDASSLSI (120 aa)). Residues 32-42 (HREHKKHKHRS) are compositionally biased toward basic residues. A compositionally biased stretch (basic and acidic residues) spans 58 to 101 (ERGGERGSGRRGAEAEARSSTHGRERSQAEPSERRVKREKRDDG). A compositionally biased stretch (low complexity) spans 104–119 (AAASSKTSSGDASSLS). Glycyl lysine isopeptide (Lys-Gly) (interchain with G-Cter in SUMO2) cross-links involve residues Lys-125 and Lys-133. A Glycyl lysine isopeptide (Lys-Gly) (interchain with G-Cter in SUMO1); alternate cross-link involves residue Lys-141. Lys-141 is covalently cross-linked (Glycyl lysine isopeptide (Lys-Gly) (interchain with G-Cter in SUMO2); alternate). Residues Lys-147 and Lys-188 each participate in a glycyl lysine isopeptide (Lys-Gly) (interchain with G-Cter in SUMO2) cross-link. Positions 157–231 (NPMALRQREE…KLLEEMDQEF (75 aa)) form a coiled coil. Thr-189 carries the phosphothreonine modification. A Glycyl lysine isopeptide (Lys-Gly) (interchain with G-Cter in SUMO2) cross-link involves residue Lys-277. A disordered region spans residues 311-330 (PDYLPYAEDESVDDLAQQKP). Ser-321 is modified (phosphoserine). Glycyl lysine isopeptide (Lys-Gly) (interchain with G-Cter in SUMO2) cross-links involve residues Lys-329 and Lys-336. Ser-348 bears the Phosphoserine mark. Thr-392 bears the Phosphothreonine mark. Glycyl lysine isopeptide (Lys-Gly) (interchain with G-Cter in SUMO2) cross-links involve residues Lys-400 and Lys-414. Residues 419–497 (RADDLLPLGD…QVLEEDEAEL (79 aa)) are disordered. Thr-430 carries the phosphothreonine modification. Phosphoserine is present on residues Ser-448, Ser-474, Ser-486, and Ser-521. Residues 490-533 (LEEDEAELELQKQLEKGRRLRQLQQLQQLRDSGEKVVEIVKKLE) are a coiled coil. A Glycyl lysine isopeptide (Lys-Gly) (interchain with G-Cter in SUMO2) cross-link involves residue Lys-548. The tract at residues 571 to 604 (LAGNREEQEELMDFERDEERSANGGSESDGEENI) is disordered. 4 positions are modified to phosphoserine: Ser-591, Ser-596, Ser-598, and Ser-621. Glycyl lysine isopeptide (Lys-Gly) (interchain with G-Cter in SUMO2) cross-links involve residues Lys-648, Lys-657, and Lys-684. Thr-695 is modified (phosphothreonine). Residues Lys-699, Lys-709, Lys-723, Lys-749, and Lys-758 each participate in a glycyl lysine isopeptide (Lys-Gly) (interchain with G-Cter in SUMO2) cross-link. Phosphoserine is present on Ser-761. Thr-764 carries the post-translational modification Phosphothreonine. Glycyl lysine isopeptide (Lys-Gly) (interchain with G-Cter in SUMO2) cross-links involve residues Lys-775 and Lys-780. A Phosphoserine modification is found at Ser-789. A Glycyl lysine isopeptide (Lys-Gly) (interchain with G-Cter in SUMO2) cross-link involves residue Lys-791.

This sequence belongs to the SNU66/SART1 family. Identified in the spliceosome C complex. Component of the U4/U6-U5 tri-snRNP complex composed of the U4, U6 and U5 snRNAs and at least PRPF3, PRPF4, PRPF6, PRPF8, PRPF31, SNRNP200, TXNL4A, SNRNP40, DDX23, CD2BP2, PPIH, SNU13, EFTUD2, SART1 and USP39. Interacts with UBL5. Interacts with IVNS1ABP (via Kelch repeats). In terms of processing, sumoylated with SUMO2. As to expression, ubiquitously expressed.

The protein resides in the nucleus. Its function is as follows. Plays a role in mRNA splicing as a component of the U4/U6-U5 tri-snRNP, one of the building blocks of the spliceosome. May also bind to DNA. This is U4/U6.U5 tri-snRNP-associated protein 1 (SART1) from Homo sapiens (Human).